Consider the following 238-residue polypeptide: MLRFAITLFAVITSSTCQQYGCLEGDTHKANPSPEPNMHECTLYSESSCCYANFTEQLAHSPIIKVSNSYWNRCGQLSKSCEDFTKKIECFYRCSPHAARWIDPRYTAAIQSVPLCQSFCDDWYEACKDDSICAHNWLTDWERDESGENHCKSKCVPYSEMYANGTDMCQSMWGESFKVSESSCLCLQMNKKDMVAIKHLLSESSEESSSMSSSEEHACQKKLLKFEALQQEEGEERR.

A signal peptide spans 1-17 (MLRFAITLFAVITSSTC). Glutamine 18 is subject to Pyrrolidone carboxylic acid. Intrachain disulfides connect cysteine 22–cysteine 49, cysteine 41–cysteine 90, cysteine 50–cysteine 94, cysteine 74–cysteine 155, cysteine 81–cysteine 127, cysteine 116–cysteine 186, cysteine 120–cysteine 169, cysteine 133–cysteine 151, and cysteine 184–cysteine 219. N-linked (GlcNAc...) asparagine glycosylation is present at asparagine 53. N-linked (GlcNAc...) asparagine glycosylation is present at asparagine 164. A phosphoserine mark is found at serine 204, serine 205, serine 208, serine 209, serine 210, serine 212, serine 213, and serine 214.

The protein belongs to the folate receptor family. Plasma and yolk RBPS have the same carbohydrate components, whereas egg-white RBP has a different, ovomucoid-type carbohydrate chain. Post-translationally, plasma RBP has the same C-terminal sequence as the egg-white RBP, which suggests that the C-terminal residues are cleaved off upon incorporation into the oocyte. Yolk RBP is synthesized in the liver; egg-white RBP is synthesized in the oviduct.

In terms of biological role, required for the transport of riboflavin to the developing oocyte. This is Riboflavin-binding protein from Gallus gallus (Chicken).